We begin with the raw amino-acid sequence, 131 residues long: Small ribosomal subunit protein uS8 (131 aa).

It belongs to the universal ribosomal protein uS8 family. Part of the 30S ribosomal subunit. Contacts proteins S5 and S12.

In terms of biological role, one of the primary rRNA binding proteins, it binds directly to 16S rRNA central domain where it helps coordinate assembly of the platform of the 30S subunit. The chain is Small ribosomal subunit protein uS8 from Ralstonia pickettii (strain 12J).